Reading from the N-terminus, the 73-residue chain is Conotoxin reg3a (73 aa).

The first 20 residues, 1–20, serve as a signal peptide directing secretion; sequence MMSKLRVLLTICLLLFPLSA. Positions 21-55 are excised as a propeptide; it reads LPLDGDQPADQPAKRMWNGKLAARKPRFDKYDLVR. 4-hydroxyproline is present on residues Pro-59, Pro-60, Pro-65, and Pro-70. Cys-72 is subject to Cysteine amide.

In terms of processing, contains 3 disulfide bonds. As to expression, expressed by the venom duct.

It localises to the secreted. The polypeptide is Conotoxin reg3a (Conus regius (Crown cone)).